We begin with the raw amino-acid sequence, 1030 residues long: MNNGKVRIYELSKELNLDNKDVLAVCDRLEIPYKSYSSTLSEEQVVQVRQVLAGAAPSEPVAAASAADSPKAERKQEIVSVRRPTPQAAGGAKPEIVGRPTASEKPQAERPNIVAPPRRPAAANEPAKAPIKPARPEKSAEKPEIVTPRPPAPAASAEPAKSPSRPAPAATPRPVAETKKPKPAAAELLRKPEIVRRSEAKPERTSEAPTPRPKIERRPEQTGPARPQLGQPVAGNGVSKPAKPVKPIELVAPPSRPKVAASASGVPAAASRVLPNKPQKPTAPGGPELKQRPKPAAPASGEDLAATVDVFQPVPPLELRRPTAPARPARPRKGWEEEEDERAAANRKAGNKAAAKAKRRQLIQDDDDDDLLTAEQELAAADALNLAMSLARPSKPKVPQAKPAVAVMPTKGRKPRRESARERQHRRRMEREQKPVRPELISLRSSMTVQELAQLMVVPETDIIKSLFFKGIAATVTQSLDVATIEQVAEEFGILVEQETEESGARKTTQMVEDADAESLQTRPPVVTVMGHVDHGKTTLLDAIRKTRVAAGEAGGITQHIGAYHVDVEHNGDQHQIVFLDTPGHEAFTAMRARGARVTDIAILVVAADDGVRPQTLEAISHAKAAEVPLIVAINKCDKEEAQPDRVKQELTEYGLVPEEWGGETVMVPVSAIKGENIDQLLEMILLVTEVEELVANPDRAARGTVIEAHLDKARGPVATLLVQNGTLRVGDVLVAGSVLGKVRAMVDDRGDRVEAATPSFAVEVLGLGDVPAAGDEFEVYSDEKSARAVATSRADEQRQSRLQQAMASRRVSLGTVSAQAQEGELKELNLILKADVQGSVEAILGSLEQLPQKQVQVRVLLAAPGEITETDVDLAAASGAVIVGFNTTLASGAKRAADEAGVDVRDYDIIYKLLEDIQAAMEGLLEPELVEEPLGQVEVRAVFSIGRGAVAGCYVQSGKAIRNCNIRVRRGSNLVYTGTLDSLKRMKEDVKEVNSGYECGIGLDSFSAWQEGDIIETYRMVTKRRTLEV.

Low complexity-rich tracts occupy residues 56-69 (APSE…AADS) and 111-132 (PNIV…APIK). Disordered regions lie at residues 56–361 (APSE…KRRQ) and 394–434 (SKPK…REQK). The span at 134–144 (ARPEKSAEKPE) shows a compositional bias: basic and acidic residues. Residues 154 to 164 (AASAEPAKSPS) show a composition bias toward low complexity. Over residues 188–206 (LLRKPEIVRRSEAKPERTS) the composition is skewed to basic and acidic residues. Over residues 259–273 (VAASASGVPAAASRV) the composition is skewed to low complexity. Positions 522 to 695 (TRPPVVTVMG…LLVTEVEELV (174 aa)) constitute a tr-type G domain. Residues 531 to 538 (GHVDHGKT) form a G1 region. 531–538 (GHVDHGKT) provides a ligand contact to GTP. Positions 556-560 (GITQH) are G2. A G3 region spans residues 581 to 584 (DTPG). GTP is bound by residues 581–585 (DTPGH) and 635–638 (NKCD). The G4 stretch occupies residues 635 to 638 (NKCD). The G5 stretch occupies residues 671 to 673 (SAI).

It belongs to the TRAFAC class translation factor GTPase superfamily. Classic translation factor GTPase family. IF-2 subfamily.

Its subcellular location is the cytoplasm. One of the essential components for the initiation of protein synthesis. Protects formylmethionyl-tRNA from spontaneous hydrolysis and promotes its binding to the 30S ribosomal subunits. Also involved in the hydrolysis of GTP during the formation of the 70S ribosomal complex. This chain is Translation initiation factor IF-2, found in Synechococcus elongatus (strain ATCC 33912 / PCC 7942 / FACHB-805) (Anacystis nidulans R2).